The chain runs to 758 residues: Actin filament-associated protein 1-like 1 (758 aa).

The tract at residues 91–194 (YRDSSENLSC…YESYDEEDEE (104 aa)) is disordered. Positions 102–120 (LPPPPSAPPPPLPTTPPPE) are enriched in pro residues. A compositionally biased stretch (polar residues) spans 137–148 (YITSRNSSSPPN). Positions 177–186 (ESDGLSSSYE) are enriched in low complexity. In terms of domain architecture, PH 1 spans 216 to 312 (DSRICAFLLR…WLRVIKEVIS (97 aa)). The disordered stretch occupies residues 335–369 (SHDKTSDSDSAANGENSSLSSGKENRDTGKCRKGG). A compositionally biased stretch (polar residues) spans 342–356 (SDSAANGENSSLSSG). The region spanning 409-503 (EVPCCGYLSV…WLGLLLAQTG (95 aa)) is the PH 2 domain. A coiled-coil region spans residues 602–690 (KTRAEEDARK…TEVKENLKKS (89 aa)). The tract at residues 692–758 (AGGPTLGLAV…KAKEWEKKKP (67 aa)) is disordered. The segment covering 749–758 (KAKEWEKKKP) has biased composition (basic and acidic residues).

It is found in the cytoplasm. The protein localises to the cell projection. The protein resides in the podosome. It localises to the invadopodium. Its subcellular location is the cytoskeleton. It is found in the stress fiber. May be involved in podosome and invadosome formation. The chain is Actin filament-associated protein 1-like 1 (afap1l1) from Xenopus tropicalis (Western clawed frog).